The primary structure comprises 178 residues: Mediator of RNA polymerase II transcription subunit 28 (178 aa).

The tract at residues 1–44 is disordered; that stretch reads MAAPLGGMFSGQPPGPPQAPPGLPGQASLLQAAPGAPRPSSSTL. Residues 13-23 are compositionally biased toward pro residues; sequence PPGPPQAPPGL. The stretch at 109-145 forms a coiled coil; the sequence is QVIKEDVSELRNELQRKDALVQKHLTKLRHWQQVLED.

The protein belongs to the Mediator complex subunit 28 family. In terms of assembly, component of the Mediator complex, which is composed of MED1, MED4, MED6, MED7, MED8, MED9, MED10, MED11, MED12, MED13, MED13L, MED14, MED15, MED16, MED17, MED18, MED19, MED20, MED21, MED22, MED23, MED24, MED25, MED26, MED27, MED29, MED30, MED31, CCNC, CDK8 and CDC2L6/CDK11. The MED12, MED13, CCNC and CDK8 subunits form a distinct module termed the CDK8 module. Mediator containing the CDK8 module is less active than Mediator lacking this module in supporting transcriptional activation. Individual preparations of the Mediator complex lacking one or more distinct subunits have been variously termed ARC, CRSP, DRIP, PC2, SMCC and TRAP. Forms a ternary complex with NF2/merlin and GRB2. Binds to actin. In terms of tissue distribution, widely expressed. Highly expressed in vascular tissues such as placenta, testis and liver.

The protein localises to the nucleus. The protein resides in the cytoplasm. It is found in the membrane. Component of the Mediator complex, a coactivator involved in the regulated transcription of nearly all RNA polymerase II-dependent genes. Mediator functions as a bridge to convey information from gene-specific regulatory proteins to the basal RNA polymerase II transcription machinery. Mediator is recruited to promoters by direct interactions with regulatory proteins and serves as a scaffold for the assembly of a functional preinitiation complex with RNA polymerase II and the general transcription factors. May be part of a complex containing NF2/merlin that participates in cellular signaling to the actin cytoskeleton downstream of tyrosine kinase signaling pathways. In Homo sapiens (Human), this protein is Mediator of RNA polymerase II transcription subunit 28 (MED28).